Consider the following 391-residue polypeptide: Formate-dependent phosphoribosylglycinamide formyltransferase (391 aa).

Residues 18–19 (EL) and Glu78 each bind N(1)-(5-phospho-beta-D-ribosyl)glycinamide. ATP is bound by residues Arg110, Lys151, 156–161 (SSGKGQ), 191–194 (EEFI), and Glu199. Residues 115–305 (ELAAQQLGVR…EFELHLRAIL (191 aa)) form the ATP-grasp domain. Mg(2+) contacts are provided by Glu264 and Glu276. Residues Asp283, Lys353, and 360-361 (RR) each bind N(1)-(5-phospho-beta-D-ribosyl)glycinamide.

It belongs to the PurK/PurT family. Homodimer.

It carries out the reaction N(1)-(5-phospho-beta-D-ribosyl)glycinamide + formate + ATP = N(2)-formyl-N(1)-(5-phospho-beta-D-ribosyl)glycinamide + ADP + phosphate + H(+). Its pathway is purine metabolism; IMP biosynthesis via de novo pathway; N(2)-formyl-N(1)-(5-phospho-D-ribosyl)glycinamide from N(1)-(5-phospho-D-ribosyl)glycinamide (formate route): step 1/1. Functionally, involved in the de novo purine biosynthesis. Catalyzes the transfer of formate to 5-phospho-ribosyl-glycinamide (GAR), producing 5-phospho-ribosyl-N-formylglycinamide (FGAR). Formate is provided by PurU via hydrolysis of 10-formyl-tetrahydrofolate. This Synechocystis sp. (strain ATCC 27184 / PCC 6803 / Kazusa) protein is Formate-dependent phosphoribosylglycinamide formyltransferase.